The chain runs to 256 residues: 3-deoxy-manno-octulosonate cytidylyltransferase (256 aa).

This sequence belongs to the KdsB family.

Its subcellular location is the cytoplasm. It catalyses the reaction 3-deoxy-alpha-D-manno-oct-2-ulosonate + CTP = CMP-3-deoxy-beta-D-manno-octulosonate + diphosphate. The protein operates within nucleotide-sugar biosynthesis; CMP-3-deoxy-D-manno-octulosonate biosynthesis; CMP-3-deoxy-D-manno-octulosonate from 3-deoxy-D-manno-octulosonate and CTP: step 1/1. It functions in the pathway bacterial outer membrane biogenesis; lipopolysaccharide biosynthesis. Activates KDO (a required 8-carbon sugar) for incorporation into bacterial lipopolysaccharide in Gram-negative bacteria. This is 3-deoxy-manno-octulosonate cytidylyltransferase from Histophilus somni (strain 129Pt) (Haemophilus somnus).